The following is an 82-amino-acid chain: RNA-binding protein Hfq (82 aa).

In terms of domain architecture, Sm spans 9 to 68; sequence DPYLNTLRKERVPVSIYLVNGIKLQGQIESFDQFVILLKNTVSQMVYKHAISTVVPSRPV.

It belongs to the Hfq family. As to quaternary structure, homohexamer.

In terms of biological role, RNA chaperone that binds small regulatory RNA (sRNAs) and mRNAs to facilitate mRNA translational regulation in response to envelope stress, environmental stress and changes in metabolite concentrations. Also binds with high specificity to tRNAs. The polypeptide is RNA-binding protein Hfq (Pseudomonas aeruginosa (strain LESB58)).